A 37-amino-acid chain; its full sequence is Large ribosomal subunit protein bL36 (37 aa).

It belongs to the bacterial ribosomal protein bL36 family.

The chain is Large ribosomal subunit protein bL36 from Gloeobacter violaceus (strain ATCC 29082 / PCC 7421).